The following is a 388-amino-acid chain: S-adenosylmethionine synthase (388 aa).

His16 is an ATP binding site. Asp18 is a Mg(2+) binding site. Glu44 serves as a coordination point for K(+). Positions 57 and 100 each coordinate L-methionine. The interval 100–110 is flexible loop; the sequence is QSADIAQGVNE. ATP-binding positions include 167-169, 233-234, Asp242, 248-249, Ala265, and Lys269; these read DAK, RF, and RK. Position 242 (Asp242) interacts with L-methionine. Lys273 serves as a coordination point for L-methionine.

The protein belongs to the AdoMet synthase family. As to quaternary structure, homotetramer; dimer of dimers. Mg(2+) is required as a cofactor. K(+) serves as cofactor.

It localises to the cytoplasm. It carries out the reaction L-methionine + ATP + H2O = S-adenosyl-L-methionine + phosphate + diphosphate. It participates in amino-acid biosynthesis; S-adenosyl-L-methionine biosynthesis; S-adenosyl-L-methionine from L-methionine: step 1/1. Catalyzes the formation of S-adenosylmethionine (AdoMet) from methionine and ATP. The overall synthetic reaction is composed of two sequential steps, AdoMet formation and the subsequent tripolyphosphate hydrolysis which occurs prior to release of AdoMet from the enzyme. The sequence is that of S-adenosylmethionine synthase from Aromatoleum aromaticum (strain DSM 19018 / LMG 30748 / EbN1) (Azoarcus sp. (strain EbN1)).